Consider the following 191-residue polypeptide: Cytochrome c oxidase subunit 6b-1 (191 aa).

The span at M1 to E14 shows a compositional bias: polar residues. The interval M1–F126 is disordered. An N-acetylalanine modification is found at A2. 2 stretches are compositionally biased toward basic and acidic residues: residues Y16–A37 and E45–S56. Low complexity predominate over residues A72 to E98. The segment covering E99–P114 has biased composition (acidic residues). One can recognise a CHCH domain in the interval T134–W177. A Cx9C motif motif is present at residues C137–C147. 2 disulfide bridges follow: C137–C169 and C147–C158. The Cx10C motif motif lies at C158–C169.

Belongs to the cytochrome c oxidase subunit 6B (TC 3.D.4.8) family. Expressed in the whole plant.

It localises to the mitochondrion. Functionally, this protein is one of the nuclear-coded polypeptide chains of cytochrome c oxidase, the terminal oxidase in mitochondrial electron transport. This protein may be one of the heme-binding subunits of the oxidase. The protein is Cytochrome c oxidase subunit 6b-1 (COX6B-1) of Arabidopsis thaliana (Mouse-ear cress).